The chain runs to 206 residues: Thymidylate kinase (206 aa).

Residue 14–21 (GGEGIGKS) participates in ATP binding.

Belongs to the thymidylate kinase family.

It carries out the reaction dTMP + ATP = dTDP + ADP. Functionally, phosphorylation of dTMP to form dTDP in both de novo and salvage pathways of dTTP synthesis. The sequence is that of Thymidylate kinase from Rickettsia bellii (strain OSU 85-389).